We begin with the raw amino-acid sequence, 222 residues long: Pyridoxine/pyridoxamine 5'-phosphate oxidase (222 aa).

Residues Arg-14 to Tyr-17 and Lys-71 each bind substrate. FMN contacts are provided by residues Arg-66–Lys-71, Phe-81–Thr-82, Arg-87, Lys-88, and Gln-110. Residues Tyr-128, Arg-132, and Ser-136 each coordinate substrate. FMN is bound by residues Gln-145–Ser-146 and Trp-190. Arg-196–Asn-198 serves as a coordination point for substrate. Arg-200 is an FMN binding site.

The protein belongs to the pyridoxamine 5'-phosphate oxidase family. As to quaternary structure, homodimer. The cofactor is FMN.

The enzyme catalyses pyridoxamine 5'-phosphate + O2 + H2O = pyridoxal 5'-phosphate + H2O2 + NH4(+). It carries out the reaction pyridoxine 5'-phosphate + O2 = pyridoxal 5'-phosphate + H2O2. It participates in cofactor metabolism; pyridoxal 5'-phosphate salvage; pyridoxal 5'-phosphate from pyridoxamine 5'-phosphate: step 1/1. It functions in the pathway cofactor metabolism; pyridoxal 5'-phosphate salvage; pyridoxal 5'-phosphate from pyridoxine 5'-phosphate: step 1/1. In terms of biological role, catalyzes the oxidation of either pyridoxine 5'-phosphate (PNP) or pyridoxamine 5'-phosphate (PMP) into pyridoxal 5'-phosphate (PLP). This is Pyridoxine/pyridoxamine 5'-phosphate oxidase from Prochlorococcus marinus (strain MIT 9303).